Consider the following 255-residue polypeptide: Carboxy-S-adenosyl-L-methionine synthase (255 aa).

S-adenosyl-L-methionine contacts are provided by residues Tyr-45, Gly-70–Ser-72, Asp-124–Ile-125, and Asn-139.

The protein belongs to the class I-like SAM-binding methyltransferase superfamily. Cx-SAM synthase family. In terms of assembly, homodimer.

It catalyses the reaction prephenate + S-adenosyl-L-methionine = carboxy-S-adenosyl-L-methionine + 3-phenylpyruvate + H2O. Catalyzes the conversion of S-adenosyl-L-methionine (SAM) to carboxy-S-adenosyl-L-methionine (Cx-SAM). This is Carboxy-S-adenosyl-L-methionine synthase from Hamiltonella defensa subsp. Acyrthosiphon pisum (strain 5AT).